The sequence spans 392 residues: Ceramide phosphoethanolamine synthase (392 aa).

The Lumenal segment spans residues 1 to 10 (MIGPSSQISK). The chain crosses the membrane as a helical span at residues 11-31 (ILLTLLFLLIIFYVFMDVELY). Residues 32–140 (LRIHNYAIER…MFDNVIGFSR (109 aa)) lie on the Cytoplasmic side of the membrane. Positions 59–82 (SESGSGSIGGSSSSSSSSSSSTST) are enriched in low complexity. A disordered region spans residues 59–91 (SESGSGSIGGSSSSSSSSSSSTSTKLPTAGDRQ). The chain crosses the membrane as a helical span at residues 141–161 (STFITPNMISFFHVGVACLAG). Over 162-212 (KLVASDSLGYRRLGVLLFQIRTFLDDLDGHVARVRKHIRGERSEIGTSGYY) the chain is Lumenal. Residues 213-233 (VDGLCDGLGCIALLLGIFFYL) form a helical membrane-spanning segment. The Cytoplasmic segment spans residues 234 to 271 (KNNPPRRGYSIIPMSDSKLPEPTMMIPKMKATTRKVAK). A helical membrane pass occupies residues 272-288 (NVISFTGQLLLSSTAWN). Residues 289–319 (RYIAVYQNMLEREDVSGNQSHCQDYVFKSTW) are Lumenal-facing. The helical transmembrane segment at 320–340 (FFCVAWMWRIVNVHALLHCVL) threads the bilayer. At 341–356 (LSIFCDKLWDFLRAIR) the chain is on the cytoplasmic side. A helical membrane pass occupies residues 357 to 377 (YSGYIILLVAICLTEMHILEA). Residues 378–392 (QNYIFNSTACSNISL) lie on the Lumenal side of the membrane.

Belongs to the CDP-alcohol phosphatidyltransferase class-I family. Mn(2+) is required as a cofactor.

It is found in the membrane. It localises to the golgi apparatus membrane. The protein resides in the cell membrane. It carries out the reaction CDP-ethanolamine + an N-acylsphing-4-enine = an N-acylsphing-4-enine 1-phosphoethanolamine + CMP + H(+). The enzyme catalyses CDP-ethanolamine + an N-acyl-sphingoid base = an N-acyl-sphingoid 1-phosphoethanolamine + CMP + H(+). In terms of biological role, catalyzes the biosynthesis of ceramide phosphoethanolamine (CPE) through the transfer of a phosphatidyl head group from cytidine 5'-diphosphate (CDP)-ethanolamine on to the primary hydroxyl of ceramide. The sequence is that of Ceramide phosphoethanolamine synthase from Drosophila melanogaster (Fruit fly).